Here is a 720-residue protein sequence, read N- to C-terminus: Heat shock protein homolog pss1 (720 aa).

Ser-38 is modified (phosphoserine). Phosphothreonine is present on Thr-39. Positions 658 to 690 (KRQKVQAEREAAKAATKSEAEKQKPSGKFEEGT) are enriched in basic and acidic residues. Residues 658 to 720 (KRQKVQAERE…ETMEIDEQKE (63 aa)) are disordered. A compositionally biased stretch (acidic residues) spans 703–720 (VAPENEEVETMEIDEQKE).

The protein belongs to the heat shock protein 70 family.

It is found in the cytoplasm. Its function is as follows. Required for normal growth at various temperatures. The polypeptide is Heat shock protein homolog pss1 (pss1) (Schizosaccharomyces pombe (strain 972 / ATCC 24843) (Fission yeast)).